The chain runs to 79 residues: D-alanyl carrier protein (79 aa).

Residues 1 to 77 (MDTKQAVLDI…KIIAKVESLR (77 aa)) enclose the Carrier domain. The residue at position 35 (Ser-35) is an O-(pantetheine 4'-phosphoryl)serine.

Belongs to the DltC family. Post-translationally, 4'-phosphopantetheine is transferred from CoA to a specific serine of apo-DCP.

It is found in the cytoplasm. The protein operates within cell wall biogenesis; lipoteichoic acid biosynthesis. Functionally, carrier protein involved in the D-alanylation of lipoteichoic acid (LTA). The loading of thioester-linked D-alanine onto DltC is catalyzed by D-alanine--D-alanyl carrier protein ligase DltA. The DltC-carried D-alanyl group is further transferred to cell membrane phosphatidylglycerol (PG) by forming an ester bond, probably catalyzed by DltD. D-alanylation of LTA plays an important role in modulating the properties of the cell wall in Gram-positive bacteria, influencing the net charge of the cell wall. This is D-alanyl carrier protein from Lactobacillus gasseri (strain ATCC 33323 / DSM 20243 / BCRC 14619 / CIP 102991 / JCM 1131 / KCTC 3163 / NCIMB 11718 / NCTC 13722 / AM63).